A 415-amino-acid chain; its full sequence is Camphor 5-monooxygenase (415 aa).

Cys358 is a binding site for heme.

It belongs to the cytochrome P450 family. It depends on heme as a cofactor.

The protein localises to the cytoplasm. It carries out the reaction 2 reduced [2Fe-2S]-[putidaredoxin] + (1R,4R)-camphor + O2 + 2 H(+) = (1R,4R,5R)-5-hydroxycamphor + 2 oxidized [2Fe-2S]-[putidaredoxin] + H2O. The protein operates within terpene metabolism; (R)-camphor degradation. In terms of biological role, involved in a camphor oxidation system. This chain is Camphor 5-monooxygenase (camC), found in Pseudomonas putida (Arthrobacter siderocapsulatus).